The chain runs to 444 residues: Phosphoglucosamine mutase (444 aa).

The active-site Phosphoserine intermediate is the serine 104. Serine 104, aspartate 243, aspartate 245, and aspartate 247 together coordinate Mg(2+). Position 104 is a phosphoserine (serine 104).

The protein belongs to the phosphohexose mutase family. Requires Mg(2+) as cofactor. Activated by phosphorylation.

It catalyses the reaction alpha-D-glucosamine 1-phosphate = D-glucosamine 6-phosphate. Functionally, catalyzes the conversion of glucosamine-6-phosphate to glucosamine-1-phosphate. The chain is Phosphoglucosamine mutase from Neisseria meningitidis serogroup C / serotype 2a (strain ATCC 700532 / DSM 15464 / FAM18).